We begin with the raw amino-acid sequence, 332 residues long: Transaldolase (332 aa).

The active-site Schiff-base intermediate with substrate is Lys135.

Belongs to the transaldolase family. Type 1 subfamily. Homodimer.

The protein resides in the cytoplasm. It catalyses the reaction D-sedoheptulose 7-phosphate + D-glyceraldehyde 3-phosphate = D-erythrose 4-phosphate + beta-D-fructose 6-phosphate. The protein operates within carbohydrate degradation; pentose phosphate pathway; D-glyceraldehyde 3-phosphate and beta-D-fructose 6-phosphate from D-ribose 5-phosphate and D-xylulose 5-phosphate (non-oxidative stage): step 2/3. Transaldolase is important for the balance of metabolites in the pentose-phosphate pathway. This is Transaldolase from Prochlorococcus marinus (strain NATL2A).